The primary structure comprises 768 residues: Multidomain esterase (768 aa).

The first 40 residues, 1-40 (MKKHFVVGETIKRFLRIGTSLALSISTLSLLPSAPRLSSA), serve as a signal peptide directing secretion. Residues 41–264 (AGTIKIMPLG…YWLEQIEGYL (224 aa)) form an acetylxylan esterase region. S68 serves as the catalytic Nucleophile; for acetylxylan esterase activity. Residues D240 and H243 each act as for acetylxylan esterase activity in the active site. The span at 267 to 283 (SDGPQQTQPTQPSQGDS) shows a compositional bias: low complexity. Residues 267 to 289 (SDGPQQTQPTQPSQGDSGPELIY) are disordered. The region spanning 285–352 (PELIYGDLDG…IIGKIKEFTV (68 aa)) is the Dockerin domain. A glucuronoyl esterase region spans residues 353–768 (AEKTVTEKPV…ADTFASKWLY (416 aa)). Positions 563-568 (GVSRYG) match the GXSYXG catalytic site motif motif. The active-site Nucleophile; for glucuronoyl esterase activity is S565. K569, E633, and W679 together coordinate substrate.

The protein in the N-terminal section; belongs to the carbohydrate esterase 3 (CE3) family. This sequence in the C-terminal section; belongs to the carbohydrate esterase 15 (CE15) family.

The protein localises to the secreted. It catalyses the reaction Deacetylation of xylans and xylo-oligosaccharides.. The enzyme catalyses a 4-O-methyl-alpha-D-glucuronosyl ester derivative + H2O = 4-O-methyl-alpha-D-glucuronate derivative + an alcohol + H(+). It functions in the pathway glycan degradation; xylan degradation. Esterase involved in the degradation of plant cell wall polysaccharides. Catalyzes the deacetylation of chemically acetylated xylan and native, steam-extracted xylan. Seems to act in synergy with the xylanase XynD which produces xylo-oligosaccharides. Also catalyzes the deesterification of methyl esters of 4-O-methyl-D-glucuronic acid (MeGlcA) side residues in synthetic glucuronoxylan methyl ester, suggesting that it may be able to cleave ester linkages between MeGlcA carboxyl and more complex alcohols, including linkages between hemicellulose and lignin alcohols in plant cell walls. This is Multidomain esterase from Ruminococcus flavefaciens.